Here is a 331-residue protein sequence, read N- to C-terminus: Induced myeloid leukemia cell differentiation protein Mcl-1 homolog (331 aa).

The interval 85 to 156 is PEST-like; the sequence is LAVPPEEMAA…PPEEEEDDLY (72 aa). S102 is modified (phosphoserine). K117 participates in a covalent cross-link: Glycyl lysine isopeptide (Lys-Gly) (interchain with G-Cter in ubiquitin). Positions 130–154 are disordered; it reads EAAKSSGADGSLPSTPPPPEEEEDD. The residue at position 140 (S140) is a Phosphoserine; by GSK3-alpha and GSK3-beta. S143 is subject to Phosphoserine. T144 is subject to Phosphothreonine; by MAPK. Residues K175 and K178 each participate in a glycyl lysine isopeptide (Lys-Gly) (interchain with G-Cter in ubiquitin) cross-link. The BH3 motif lies at 190–204; the sequence is ALETLRRVGDGVQRN. The BH1 signature appears at 234–253; sequence VFKDGVTNWGRIVTLISFGA. The BH2 signature appears at 285–300; it reads DWLVKQRGWDGFVEFF. The helical transmembrane segment at 308 to 330 threads the bilayer; it reads GIRNVLLAFAGVAGVGAGLAYLI.

This sequence belongs to the Bcl-2 family. In terms of assembly, interacts with HIF3A isoform 2 (via C-terminus domain). Interacts with BAD, BOK, BIK, BAX, BAK1, and TPT1. Interacts with BBC3, BMF and PMAIP1. Interacts with BOP. Interacts with BCL2L11; this interaction may sequester BCL2L11 and prevent its pro-apoptotic activity. Interacts with GIMAP5 and HSPA8/HSC70; the interaction between HSPA8 and MCL1 is impaired in the absence of GIMAP5. Post-translationally, cleaved by CASP3 during apoptosis, yielding a pro-apoptotic C-terminal fragment. Rapidly degraded in the absence of phosphorylation in the PEST region. In terms of processing, phosphorylated on Ser-140, by GSK3, in response to IL3/interleukin-3 withdrawal. Phosphorylation at Ser-140 induces ubiquitination and proteasomal degradation, abrogating the anti-apoptotic activity. Treatment with taxol or okadaic acid induces phosphorylation on additional sites. Post-translationally, ubiquitinated. Ubiquitination is induced by phosphorylation at Ser-140. Deubiquitinated by USP20; leading to increased stability.

It localises to the membrane. It is found in the cytoplasm. Its subcellular location is the mitochondrion. The protein resides in the nucleus. The protein localises to the nucleoplasm. Involved in the regulation of apoptosis versus cell survival, and in the maintenance of viability but not of proliferation. Mediates its effects by interactions with a number of other regulators of apoptosis. Isoform 2 has antiapoptotic activity. In Mus musculus (Mouse), this protein is Induced myeloid leukemia cell differentiation protein Mcl-1 homolog (Mcl1).